The chain runs to 394 residues: Homoserine O-succinyltransferase (394 aa).

Residues asparagine 54–leucine 368 form the AB hydrolase-1 domain. Serine 160 functions as the Nucleophile in the catalytic mechanism. Arginine 236 serves as a coordination point for substrate. Catalysis depends on residues aspartate 331 and histidine 364. Aspartate 365 is a binding site for substrate.

Belongs to the AB hydrolase superfamily. MetX family. In terms of assembly, homodimer.

The protein resides in the cytoplasm. It carries out the reaction L-homoserine + succinyl-CoA = O-succinyl-L-homoserine + CoA. It functions in the pathway amino-acid biosynthesis; L-methionine biosynthesis via de novo pathway; O-succinyl-L-homoserine from L-homoserine: step 1/1. Transfers a succinyl group from succinyl-CoA to L-homoserine, forming succinyl-L-homoserine. The sequence is that of Homoserine O-succinyltransferase from Magnetococcus marinus (strain ATCC BAA-1437 / JCM 17883 / MC-1).